The following is a 299-amino-acid chain: 33 kDa chaperonin (299 aa).

2 cysteine pairs are disulfide-bonded: cysteine 238/cysteine 240 and cysteine 271/cysteine 274.

It belongs to the HSP33 family. In terms of processing, under oxidizing conditions two disulfide bonds are formed involving the reactive cysteines. Under reducing conditions zinc is bound to the reactive cysteines and the protein is inactive.

Its subcellular location is the cytoplasm. Its function is as follows. Redox regulated molecular chaperone. Protects both thermally unfolding and oxidatively damaged proteins from irreversible aggregation. Plays an important role in the bacterial defense system toward oxidative stress. This is 33 kDa chaperonin from Alkaliphilus oremlandii (strain OhILAs) (Clostridium oremlandii (strain OhILAs)).